The chain runs to 79 residues: uncharacterized protein (79 aa).

The signal sequence occupies residues 1–19 (MKYVALAFVLSLVILQISA).

As to expression, nacreous layer of shell (at protein level). Expressed primarily in the mantle with highest level in the mantle pallium and lower level in the mantle edge.

The protein localises to the secreted. This is an uncharacterized protein from Pinctada maxima (Silver-lipped pearl oyster).